Reading from the N-terminus, the 276-residue chain is Small ribosomal subunit protein uS2 (276 aa).

Residues 255-276 (ASATATAAPTEAGAPEPTTDPS) form a disordered region.

Belongs to the universal ribosomal protein uS2 family.

This chain is Small ribosomal subunit protein uS2, found in Mycolicibacterium paratuberculosis (strain ATCC BAA-968 / K-10) (Mycobacterium paratuberculosis).